The following is a 432-amino-acid chain: Adenylosuccinate synthetase (432 aa).

Residues 13–19 (GDEGKGK) and 41–43 (GHT) each bind GTP. The active-site Proton acceptor is the Asp14. Mg(2+) contacts are provided by Asp14 and Gly41. IMP contacts are provided by residues 14 to 17 (DEGK), 39 to 42 (NAGH), Thr130, Arg144, Gln225, Thr240, and Arg304. The Proton donor role is filled by His42. 300–306 (ATTGRRR) serves as a coordination point for substrate. GTP-binding positions include Arg306, 332–334 (KLD), and 415–417 (STG).

It belongs to the adenylosuccinate synthetase family. As to quaternary structure, homodimer. The cofactor is Mg(2+).

It is found in the cytoplasm. The catalysed reaction is IMP + L-aspartate + GTP = N(6)-(1,2-dicarboxyethyl)-AMP + GDP + phosphate + 2 H(+). The protein operates within purine metabolism; AMP biosynthesis via de novo pathway; AMP from IMP: step 1/2. Functionally, plays an important role in the de novo pathway of purine nucleotide biosynthesis. Catalyzes the first committed step in the biosynthesis of AMP from IMP. The protein is Adenylosuccinate synthetase of Citrobacter koseri (strain ATCC BAA-895 / CDC 4225-83 / SGSC4696).